The primary structure comprises 225 residues: PKHD-type hydroxylase YbiX (225 aa).

Residues 78–177 (TLSTPLFNRY…RVASFMWIQS (100 aa)) form the Fe2OG dioxygenase domain. Residues histidine 96, aspartate 98, and histidine 158 each contribute to the Fe cation site. Arginine 168 contacts 2-oxoglutarate.

Requires Fe(2+) as cofactor. It depends on L-ascorbate as a cofactor.

This Escherichia coli O81 (strain ED1a) protein is PKHD-type hydroxylase YbiX.